Consider the following 305-residue polypeptide: Deoxyribonuclease gamma (305 aa).

The N-terminal stretch at Met-1–Ala-20 is a signal peptide. The Bipartite nuclear localization signal signature appears at Lys-35 to Arg-51. Active-site residues include Glu-100 and His-155. A disulfide bridge links Cys-194 with Cys-231. The not required for free DNA-nuclease activity but required for activity towards liposome-coated DNA stretch occupies residues Ser-284–Ser-305. The short motif at Leu-296–Arg-304 is the Nuclear localization signal element.

It belongs to the DNase I family. It depends on Ca(2+) as a cofactor. Requires Mg(2+) as cofactor. Poly-ADP-ribosylated by PARP1. ADP-ribosylation negatively regulates enzymatic activity during apoptosis. As to expression, liver and spleen.

It localises to the nucleus. Its subcellular location is the endoplasmic reticulum. The protein resides in the secreted. With respect to regulation, inhibited by zinc. In terms of biological role, has DNA hydrolytic activity. Is capable of both single- and double-stranded DNA cleavage, producing DNA fragments with 3'-OH ends. Can cleave chromatin to nucleosomal units and cleaves nucleosomal and liposome-coated DNA. Acts in internucleosomal DNA fragmentation (INDF) during apoptosis and necrosis. The role in apoptosis includes myogenic and neuronal differentiation, and BCR-mediated clonal deletion of self-reactive B cells. Is active on chromatin in apoptotic cell-derived membrane-coated microparticles and thus suppresses anti-DNA autoimmunity. Together with DNASE1, plays a key role in degrading neutrophil extracellular traps (NETs). NETs are mainly composed of DNA fibers and are released by neutrophils to bind pathogens during inflammation. Degradation of intravascular NETs by DNASE1 and DNASE1L3 is required to prevent formation of clots that obstruct blood vessels and cause organ damage following inflammation. The protein is Deoxyribonuclease gamma of Homo sapiens (Human).